The chain runs to 362 residues: Methylthioribose-1-phosphate isomerase (362 aa).

The Proton donor role is filled by D252.

Belongs to the eIF-2B alpha/beta/delta subunits family. MtnA subfamily.

It is found in the cytoplasm. The protein localises to the nucleus. It catalyses the reaction 5-(methylsulfanyl)-alpha-D-ribose 1-phosphate = 5-(methylsulfanyl)-D-ribulose 1-phosphate. The protein operates within amino-acid biosynthesis; L-methionine biosynthesis via salvage pathway; L-methionine from S-methyl-5-thio-alpha-D-ribose 1-phosphate: step 1/6. Catalyzes the interconversion of methylthioribose-1-phosphate (MTR-1-P) into methylthioribulose-1-phosphate (MTRu-1-P). This Drosophila pseudoobscura pseudoobscura (Fruit fly) protein is Methylthioribose-1-phosphate isomerase.